Here is a 400-residue protein sequence, read N- to C-terminus: Argininosuccinate synthase (400 aa).

8–16 (AYSGGLDTS) is an ATP binding site. Tyr-87 contacts L-citrulline. Residue Gly-117 coordinates ATP. Residues Thr-119, Asn-123, and Asp-124 each coordinate L-aspartate. L-citrulline is bound at residue Asn-123. Positions 127, 175, 260, and 272 each coordinate L-citrulline.

This sequence belongs to the argininosuccinate synthase family. Type 1 subfamily. In terms of assembly, homotetramer.

It localises to the cytoplasm. The enzyme catalyses L-citrulline + L-aspartate + ATP = 2-(N(omega)-L-arginino)succinate + AMP + diphosphate + H(+). It participates in amino-acid biosynthesis; L-arginine biosynthesis; L-arginine from L-ornithine and carbamoyl phosphate: step 2/3. The chain is Argininosuccinate synthase from Mycolicibacterium gilvum (strain PYR-GCK) (Mycobacterium gilvum (strain PYR-GCK)).